The chain runs to 296 residues: Ribonuclease HIII (296 aa).

Residues 80–296 form the RNase H type-2 domain; sequence LALIGSDEVG…NTKKAYQRLK (217 aa). Residues Asp86, Glu87, and Asp191 each contribute to the a divalent metal cation site.

Belongs to the RNase HII family. RnhC subfamily. The cofactor is Mn(2+). It depends on Mg(2+) as a cofactor.

It localises to the cytoplasm. The enzyme catalyses Endonucleolytic cleavage to 5'-phosphomonoester.. Functionally, endonuclease that specifically degrades the RNA of RNA-DNA hybrids. The sequence is that of Ribonuclease HIII from Streptococcus thermophilus (strain CNRZ 1066).